The sequence spans 89 residues: Small ribosomal subunit protein uS15 (89 aa).

Belongs to the universal ribosomal protein uS15 family. Part of the 30S ribosomal subunit. Forms a bridge to the 50S subunit in the 70S ribosome, contacting the 23S rRNA.

In terms of biological role, one of the primary rRNA binding proteins, it binds directly to 16S rRNA where it helps nucleate assembly of the platform of the 30S subunit by binding and bridging several RNA helices of the 16S rRNA. Functionally, forms an intersubunit bridge (bridge B4) with the 23S rRNA of the 50S subunit in the ribosome. The polypeptide is Small ribosomal subunit protein uS15 (Desulforapulum autotrophicum (strain ATCC 43914 / DSM 3382 / VKM B-1955 / HRM2) (Desulfobacterium autotrophicum)).